Consider the following 490-residue polypeptide: Protein dead ringer homolog (490 aa).

Basic and acidic residues predominate over residues 1-33 (MVEDQRRQLMEEEDEERRLILEEQRRRMMRADR). 2 disordered regions span residues 1-77 (MVED…AHID) and 106-135 (ITQSPPLTNGSNHDNDHDPYLSHRAAHGGS). Positions 34 to 50 (DEEEEEEEEEEEEEREE) are enriched in acidic residues. Residues 51 to 76 (DDGRRSEDEMREDEPPGRRETSHAHI) are compositionally biased toward basic and acidic residues. Polar residues predominate over residues 106-117 (ITQSPPLTNGSN). In terms of domain architecture, ARID spans 202 to 294 (DSKRKEFLDD…YLYPYECEKK (93 aa)). Positions 298-369 (SPSELQSAID…PPRLSPSTSP (72 aa)) are disordered. Residues 316–325 (PSYHSPHMHP) show a composition bias toward basic residues. Positions 389–479 (AAMLAELAER…GVLYPRGGTR (91 aa)) constitute an REKLES domain.

It is found in the nucleus. Functionally, transcription factor involved in skeletogenesis and oral ectoderm patterning. The chain is Protein dead ringer homolog (dri) from Strongylocentrotus purpuratus (Purple sea urchin).